We begin with the raw amino-acid sequence, 331 residues long: 6-phosphogluconolactonase (331 aa).

This sequence belongs to the cycloisomerase 2 family.

It catalyses the reaction 6-phospho-D-glucono-1,5-lactone + H2O = 6-phospho-D-gluconate + H(+). Its pathway is carbohydrate degradation; pentose phosphate pathway; D-ribulose 5-phosphate from D-glucose 6-phosphate (oxidative stage): step 2/3. Functionally, catalyzes the hydrolysis of 6-phosphogluconolactone to 6-phosphogluconate. The chain is 6-phosphogluconolactonase from Serratia proteamaculans (strain 568).